The following is a 349-amino-acid chain: Phospho-N-acetylmuramoyl-pentapeptide-transferase (349 aa).

Helical transmembrane passes span 13–33, 69–89, 91–111, 129–149, 165–185, 197–217, 228–248, 252–272, 278–298, and 327–347; these read LFFS…SLGV, GGGV…LPWG, FSTW…WYDD, FMVQ…IYGS, LSLP…VAII, LDGL…FVAL, VAYV…YNGF, LFMG…CAVM, ILVV…LQVL, and IVMR…AAVL.

This sequence belongs to the glycosyltransferase 4 family. MraY subfamily. It depends on Mg(2+) as a cofactor.

The protein resides in the cell inner membrane. The catalysed reaction is UDP-N-acetyl-alpha-D-muramoyl-L-alanyl-gamma-D-glutamyl-meso-2,6-diaminopimeloyl-D-alanyl-D-alanine + di-trans,octa-cis-undecaprenyl phosphate = di-trans,octa-cis-undecaprenyl diphospho-N-acetyl-alpha-D-muramoyl-L-alanyl-D-glutamyl-meso-2,6-diaminopimeloyl-D-alanyl-D-alanine + UMP. It participates in cell wall biogenesis; peptidoglycan biosynthesis. In terms of biological role, catalyzes the initial step of the lipid cycle reactions in the biosynthesis of the cell wall peptidoglycan: transfers peptidoglycan precursor phospho-MurNAc-pentapeptide from UDP-MurNAc-pentapeptide onto the lipid carrier undecaprenyl phosphate, yielding undecaprenyl-pyrophosphoryl-MurNAc-pentapeptide, known as lipid I. The sequence is that of Phospho-N-acetylmuramoyl-pentapeptide-transferase from Chlamydia pneumoniae (Chlamydophila pneumoniae).